Consider the following 488-residue polypeptide: Probable indole-3-acetic acid-amido synthetase GH3.6 (488 aa).

Belongs to the IAA-amido conjugating enzyme family. In terms of tissue distribution, expressed in roots and callus.

Its function is as follows. May catalyze the synthesis of indole-3-acetic acid (IAA)-amino acid conjugates, providing a mechanism for the plant to cope with the presence of excess auxin. The polypeptide is Probable indole-3-acetic acid-amido synthetase GH3.6 (GH3.6) (Oryza sativa subsp. japonica (Rice)).